We begin with the raw amino-acid sequence, 422 residues long: Protein phosphatase 1 regulatory subunit 36 (422 aa).

As to quaternary structure, interacts with PPP1CA.

Inhibits phosphatase activity of protein phosphatase 1 (PP1) complexes. In Homo sapiens (Human), this protein is Protein phosphatase 1 regulatory subunit 36 (PPP1R36).